The following is a 231-amino-acid chain: 6-phosphogluconolactonase (231 aa).

Belongs to the glucosamine/galactosamine-6-phosphate isomerase family. 6-phosphogluconolactonase subfamily.

The enzyme catalyses 6-phospho-D-glucono-1,5-lactone + H2O = 6-phospho-D-gluconate + H(+). It functions in the pathway carbohydrate degradation; pentose phosphate pathway; D-ribulose 5-phosphate from D-glucose 6-phosphate (oxidative stage): step 2/3. Hydrolysis of 6-phosphogluconolactone to 6-phosphogluconate. The chain is 6-phosphogluconolactonase (pgl) from Neisseria meningitidis serogroup A / serotype 4A (strain DSM 15465 / Z2491).